We begin with the raw amino-acid sequence, 556 residues long: ATP synthase subunit beta-1, mitochondrial (556 aa).

The segment covering 1–20 (MASRRVLSSLLRSSSGRSAA) has biased composition (low complexity). The interval 1-37 (MASRRVLSSLLRSSSGRSAAKLGNRNPRLPSPSPARH) is disordered. Residues 1–51 (MASRRVLSSLLRSSSGRSAAKLGNRNPRLPSPSPARHAAPCSYLLGRVAEY) constitute a mitochondrion transit peptide. At Ser59 the chain carries Phosphoserine. 231 to 238 (GGAGVGKT) contacts ATP.

It belongs to the ATPase alpha/beta chains family. In terms of assembly, F-type ATPases have 2 components, CF(1) - the catalytic core - and CF(0) - the membrane proton channel. CF(1) has five subunits: alpha(3), beta(3), gamma(1), delta(1), epsilon(1). CF(0) has three main subunits: a, b and c.

It localises to the mitochondrion. It is found in the mitochondrion inner membrane. It catalyses the reaction ATP + H2O + 4 H(+)(in) = ADP + phosphate + 5 H(+)(out). Functionally, mitochondrial membrane ATP synthase (F(1)F(0) ATP synthase or Complex V) produces ATP from ADP in the presence of a proton gradient across the membrane which is generated by electron transport complexes of the respiratory chain. F-type ATPases consist of two structural domains, F(1) - containing the extramembraneous catalytic core, and F(0) - containing the membrane proton channel, linked together by a central stalk and a peripheral stalk. During catalysis, ATP synthesis in the catalytic domain of F(1) is coupled via a rotary mechanism of the central stalk subunits to proton translocation. Subunits alpha and beta form the catalytic core in F(1). Rotation of the central stalk against the surrounding alpha(3)beta(3) subunits leads to hydrolysis of ATP in three separate catalytic sites on the beta subunits. The protein is ATP synthase subunit beta-1, mitochondrial of Arabidopsis thaliana (Mouse-ear cress).